Here is a 57-residue protein sequence, read N- to C-terminus: Weak toxin CM-1b (57 aa).

4 disulfides stabilise this stretch: Cys-3–Cys-19, Cys-12–Cys-37, Cys-40–Cys-49, and Cys-50–Cys-55.

Belongs to the three-finger toxin family. Short-chain subfamily. Orphan group XX sub-subfamily. As to expression, expressed by the venom gland.

The protein localises to the secreted. The polypeptide is Weak toxin CM-1b (Hemachatus haemachatus (Rinkhals)).